Here is a 1088-residue protein sequence, read N- to C-terminus: DNA ligase 4 (1088 aa).

Disordered stretches follow at residues 1-56 and 73-117; these read MALS…KFND and TTTT…TTTT. Composition is skewed to low complexity over residues 25–53 and 73–90; these read DFKN…YNNK and TTTT…INKT. Residues 95–105 are compositionally biased toward acidic residues; the sequence is DDIFDDEDEDS. ATP is bound by residues Glu414, Lys416, Arg421, Glu467, Phe514, Glu574, Lys579, Lys596, and Lys598. Residue Lys416 is the N6-AMP-lysine intermediate of the active site. A Mg(2+)-binding site is contributed by Glu467. Glu574 serves as a coordination point for Mg(2+). BRCT domains follow at residues 827–917 and 984–1088; these read PTQN…PKYM and CWWS…EILD.

The protein belongs to the ATP-dependent DNA ligase family. The cofactor is Mg(2+).

The protein resides in the nucleus. It carries out the reaction ATP + (deoxyribonucleotide)n-3'-hydroxyl + 5'-phospho-(deoxyribonucleotide)m = (deoxyribonucleotide)n+m + AMP + diphosphate.. In terms of biological role, DNA ligase involved in DNA non-homologous end joining (NHEJ); required for double-strand break (DSB) repair. The protein is DNA ligase 4 (lig4) of Dictyostelium discoideum (Social amoeba).